Reading from the N-terminus, the 396-residue chain is L-lactate dehydrogenase (396 aa).

Residues 1–380 form the FMN hydroxy acid dehydrogenase domain; it reads MIISAASDYR…TQDSLVQGLG (380 aa). Tyr24 serves as a coordination point for substrate. The FMN site is built by Ser106 and Gln127. Tyr129 contacts substrate. Thr155 contributes to the FMN binding site. Arg164 contacts substrate. Lys251 is an FMN binding site. The active-site Proton acceptor is His275. Arg278 lines the substrate pocket. 306-330 lines the FMN pocket; sequence DSGIRNGLDVVRMIALGADTVLLGR.

This sequence belongs to the FMN-dependent alpha-hydroxy acid dehydrogenase family. FMN is required as a cofactor.

Its subcellular location is the cell inner membrane. The enzyme catalyses (S)-lactate + A = pyruvate + AH2. Catalyzes the conversion of L-lactate to pyruvate. Is coupled to the respiratory chain. The polypeptide is L-lactate dehydrogenase (Shigella boydii serotype 4 (strain Sb227)).